Consider the following 364-residue polypeptide: Chorismate synthase (364 aa).

Residue arginine 47 participates in NADP(+) binding. FMN contacts are provided by residues arginine 124 to serine 126, glycine 287, lysine 302 to threonine 306, and arginine 328.

The protein belongs to the chorismate synthase family. In terms of assembly, homotetramer. FMNH2 serves as cofactor.

It catalyses the reaction 5-O-(1-carboxyvinyl)-3-phosphoshikimate = chorismate + phosphate. It participates in metabolic intermediate biosynthesis; chorismate biosynthesis; chorismate from D-erythrose 4-phosphate and phosphoenolpyruvate: step 7/7. In terms of biological role, catalyzes the anti-1,4-elimination of the C-3 phosphate and the C-6 proR hydrogen from 5-enolpyruvylshikimate-3-phosphate (EPSP) to yield chorismate, which is the branch point compound that serves as the starting substrate for the three terminal pathways of aromatic amino acid biosynthesis. This reaction introduces a second double bond into the aromatic ring system. The chain is Chorismate synthase from Prochlorococcus marinus subsp. pastoris (strain CCMP1986 / NIES-2087 / MED4).